The chain runs to 1244 residues: Superkiller complex protein 2 (1244 aa).

The tract at residues 218-249 (LDLSGGDEDEGEAAGGPRGDNASPSPSGTPLV) is disordered. A phosphoserine mark is found at S242 and S253. Residues 316–472 (ILHLEQHDSV…WIGRLKRRQI (157 aa)) form the Helicase ATP-binding domain. ATP is bound at residue 329 to 336 (AHTSAGKT). The DEVH box motif lies at 420 to 423 (DEVH). In terms of domain architecture, Helicase C-terminal spans 582–752 (GLTSLDLTTS…LTYTMILNLL (171 aa)).

This sequence belongs to the helicase family. SKI2 subfamily. As to quaternary structure, component of the SKI complex which consists of SKIC2, SKIC3 and SKIC8. Interacts with HBS1L isoform 2.

The protein localises to the nucleus. Its subcellular location is the cytoplasm. The enzyme catalyses ATP + H2O = ADP + phosphate + H(+). In terms of biological role, helicase component of the SKI complex, a multiprotein complex that assists the RNA-degrading exosome during the mRNA decay and quality-control pathways. The SKI complex catalyzes mRNA extraction from 80S ribosomal complexes in the 3'-5' direction and channels mRNA to the cytosolic exosome for degradation. SKI-mediated extraction of mRNA from stalled ribosomes allow binding of the Pelota-HBS1L complex and subsequent ribosome disassembly by ABCE1 for ribosome recycling. In the nucleus, the SKI complex associates with transcriptionally active genes in a manner dependent on PAF1 complex (PAF1C). The chain is Superkiller complex protein 2 from Mus musculus (Mouse).